Reading from the N-terminus, the 145-residue chain is MSILLSPPSLLLLLAALVAPATSTTNYRPDWNRLRGLARGRVETCGGUQLNRLKEVKAFVTEDIQLYHNLVMKHLPGADPELVLLSRNYQELERIPLSQMTRDEINALVQELGFYRKSAPEAQVPPEYLWAPAKPPEEASEHDDL.

Residues 1–23 (MSILLSPPSLLLLLAALVAPATS) form the signal peptide. Catalysis depends on nucleophile residues Cys-45 and Sec-48. A cross-link (cysteinyl-selenocysteine (Cys-Sec)) is located at residues 45–48 (CGGU). Position 48 (Sec-48) is a non-standard amino acid, selenocysteine. Residues 125–145 (PPEYLWAPAKPPEEASEHDDL) are disordered.

It belongs to the selenoprotein M/F family. As to expression, widely expressed. Highly expressed in brain.

Its subcellular location is the cytoplasm. The protein localises to the perinuclear region. It localises to the endoplasmic reticulum. It is found in the golgi apparatus. May function as a thiol-disulfide oxidoreductase that participates in disulfide bond formation. The chain is Selenoprotein M from Mus musculus (Mouse).